The primary structure comprises 826 residues: MHLHLLAAEKTPPSPSPNPTPTPSASPSGHTGAAGESQLDLASQTESQLQLGLPLASGYGLGLGLGLGLGLGLGQELVADHSTTVAPVSVAGPGRLGRSINGSGGSHHHHHLHHHYSPYHHAHPYHPPHPHAPHHHHHHHPPYPYPPAGPHPPAMVTSSSTSPTGNGWSSSTGDFKGITAVATATGGGVGGATQGATASTGATAAEVLAVSSSASVGSSSPTGGASNGTAHSGHSGHTGGHSSSTASNNNNNGASNSNSNNNNAVHQDLLWMERLVQKRQQEHPGELVRTSNPYFLCSALPAHWRSNKTLPMAFKVVALAEVGDGTYVTIRAGNDENCCAELRNFTTQMKNDVAKFNDLRFVGRSGRGKSFTLTITVATSPPQVATYAKAIKVTVDGPREPRSKTSPTGGPHYRALGLGQRPYIDGFPSTKALHELESLRRSAKVAAVTTAAAAAATAASAANAVAAAAAAVAVTPTGGGGGVAAGGVAGGAGAGLVQQLSSNYSSPNSTINSDCQVYKPNAPHIQAAEMMGAGEWTNGSSSSAAAYYHSHAHHPHAHHAHAHLQHQMALPPPPPPPAAAPVSVGVGGNGATMGMGMGVGVGMGMNHYGGGYDSANSLEAGQYAAHLPAVLPEMHGHGFATDPYQTAGYGGGNTGGGSASKSELDYGGSYNQAWSNGYQNYQYGSCLATAQYGPQAAPPPQPPPPPPVVLCPQLYSTVNQNQIHLHLHSSEKLEQYLGTATSADHLTIGSLTGSSRSSIEIGQDQYHQQVHHAQQQQQQQQQQQQVHHPQQQQVESAGEVGGSGAGGVESAREEDVGDLSQVWRPY.

Disordered regions lie at residues 1-45 (MHLH…ASQT), 87-171 (PVSV…WSSS), and 214-263 (ASVG…NNNN). Pro residues predominate over residues 12–24 (PPSPSPNPTPTPS). The segment covering 106-141 (SHHHHHLHHHYSPYHHAHPYHPPHPHAPHHHHHHHP) has biased composition (basic residues). The span at 142 to 153 (PYPYPPAGPHPP) shows a compositional bias: pro residues. A compositionally biased stretch (polar residues) spans 156-171 (VTSSSTSPTGNGWSSS). Residues 275-403 (LVQKRQQEHP…TVDGPREPRS (129 aa)) form the Runt domain. A compositionally biased stretch (low complexity) spans 774–798 (QQQQQQQQQQQQVHHPQQQQVESAG). Residues 774-826 (QQQQQQQQQQQQVHHPQQQQVESAGEVGGSGAGGVESAREEDVGDLSQVWRPY) are disordered.

Expressed in the pupal eye during programmed cell death.

It is found in the nucleus. Its function is as follows. Involved in prepatterning photoreceptor precursors in the developing eye; in the larval eye disk it defines a subset of cells as an equipotential group that is competent to respond to the sevenless developmental signal and another subset that confer proper photoreceptor identity by positively regulating the homeo box gene Bar. Involved in the aop/pnt dynamic in a Ras-dependent manner to regulate pros expression. Promotes apoptosis in the pupal eye by directly activating aos and klu. Also modulates hid- and rpr-mediated cell death. Regulates amos function in olfactory sensilla development. The polypeptide is Protein lozenge (lz) (Drosophila melanogaster (Fruit fly)).